A 319-amino-acid polypeptide reads, in one-letter code: Ninja-family protein Os07g0602900 (319 aa).

Disordered stretches follow at residues 1–26, 69–152, and 181–234; these read MAAS…EKGG, LPGG…DAMY, and AEAM…LTMR. Positions 70–79 are enriched in gly residues; the sequence is PGGGGGGAGG. The segment covering 105–118 has biased composition (basic and acidic residues); it reads ERWRRREMQSLKRL. Residues 185 to 196 are compositionally biased toward polar residues; sequence DTSSSDNASCQN. The span at 225-234 shows a compositional bias: low complexity; that stretch reads LRTLRSLTMR.

It belongs to the Ninja family.

Its subcellular location is the nucleus. The polypeptide is Ninja-family protein Os07g0602900 (Oryza sativa subsp. japonica (Rice)).